The sequence spans 298 residues: uncharacterized protein (298 aa).

The protein localises to the cytoplasm. Its subcellular location is the nucleus. This is an uncharacterized protein from Schizosaccharomyces pombe (strain 972 / ATCC 24843) (Fission yeast).